The following is a 140-amino-acid chain: Lipoprotein MlpD (140 aa).

Residues 1–17 form the signal peptide; it reads MKIINILFCLFLLMLNG. Cys-18 carries N-palmitoyl cysteine lipidation. Cys-18 carries S-diacylglycerol cysteine lipidation. Residues 22–53 are disordered; that stretch reads DTNNSQTKSRQKRDLTQKEATQEKPKSKEELL. Residues 33–53 show a composition bias toward basic and acidic residues; that stretch reads KRDLTQKEATQEKPKSKEELL.

This sequence belongs to the Multicopy lipoprotein (Mlp) family.

It localises to the cell outer membrane. Its function is as follows. An outer membrane protein that may participate in pathogenesis. Some human Lyme disease patients have antibodies against this protein. The Mlp proteins probably undergo intragenic recombination, generating new alleles. The polypeptide is Lipoprotein MlpD (Borreliella burgdorferi (strain ATCC 35210 / DSM 4680 / CIP 102532 / B31) (Borrelia burgdorferi)).